Reading from the N-terminus, the 227-residue chain is Thiamine-phosphate synthase (227 aa).

Residues 46–50 (QLRDK) and asparagine 87 contribute to the 4-amino-2-methyl-5-(diphosphooxymethyl)pyrimidine site. Aspartate 88 and aspartate 107 together coordinate Mg(2+). Residue serine 126 coordinates 4-amino-2-methyl-5-(diphosphooxymethyl)pyrimidine. 152–154 (TPT) serves as a coordination point for 2-[(2R,5Z)-2-carboxy-4-methylthiazol-5(2H)-ylidene]ethyl phosphate. Lysine 155 is a binding site for 4-amino-2-methyl-5-(diphosphooxymethyl)pyrimidine. Glycine 183 contributes to the 2-[(2R,5Z)-2-carboxy-4-methylthiazol-5(2H)-ylidene]ethyl phosphate binding site.

It belongs to the thiamine-phosphate synthase family. It depends on Mg(2+) as a cofactor.

It catalyses the reaction 2-[(2R,5Z)-2-carboxy-4-methylthiazol-5(2H)-ylidene]ethyl phosphate + 4-amino-2-methyl-5-(diphosphooxymethyl)pyrimidine + 2 H(+) = thiamine phosphate + CO2 + diphosphate. It carries out the reaction 2-(2-carboxy-4-methylthiazol-5-yl)ethyl phosphate + 4-amino-2-methyl-5-(diphosphooxymethyl)pyrimidine + 2 H(+) = thiamine phosphate + CO2 + diphosphate. The enzyme catalyses 4-methyl-5-(2-phosphooxyethyl)-thiazole + 4-amino-2-methyl-5-(diphosphooxymethyl)pyrimidine + H(+) = thiamine phosphate + diphosphate. Its pathway is cofactor biosynthesis; thiamine diphosphate biosynthesis; thiamine phosphate from 4-amino-2-methyl-5-diphosphomethylpyrimidine and 4-methyl-5-(2-phosphoethyl)-thiazole: step 1/1. Functionally, condenses 4-methyl-5-(beta-hydroxyethyl)thiazole monophosphate (THZ-P) and 2-methyl-4-amino-5-hydroxymethyl pyrimidine pyrophosphate (HMP-PP) to form thiamine monophosphate (TMP). This Mycolicibacterium smegmatis (strain ATCC 700084 / mc(2)155) (Mycobacterium smegmatis) protein is Thiamine-phosphate synthase.